We begin with the raw amino-acid sequence, 183 residues long: Caspase recruitment domain-containing protein 19 (183 aa).

Cysteines 7 and 77 form a disulfide. Positions 8–99 (DRLVQDTPFL…PLHSHLPSRY (92 aa)) constitute a CARD domain. Residues 122-142 (GPMSFLAGLGLAAGLALLLYC) traverse the membrane as a helical segment.

In terms of assembly, associates with BCL10 by CARD-CARD interaction.

The protein localises to the endoplasmic reticulum membrane. The protein resides in the mitochondrion membrane. Plays a role in inhibiting the effects of BCL10-induced activation of NF-kappa-B. This Mus musculus (Mouse) protein is Caspase recruitment domain-containing protein 19.